The sequence spans 156 residues: Large ribosomal subunit protein eL29 (156 aa).

Over residues 1-26 (MAKSKNHTTHNQSRKWHRNGIKKPRS) the composition is skewed to basic residues. Disordered regions lie at residues 1 to 35 (MAKS…LKGV) and 116 to 156 (RRLC…VKAP). K5 is subject to N6-methyllysine. S31 is modified (phosphoserine). Residue K33 is modified to N6-acetyllysine. Tandem repeats lie at residues 129–136 (AEAKAPAK) and 137–144 (AQAKAPAQ). Residues 129–144 (AEAKAPAKAQAKAPAQ) form a 2 X 8 AA tandem repeats of A-X-A-K-A-P-A-[KQ] region. The segment covering 134 to 156 (PAKAQAKAPAQAPKGAQAPVKAP) has biased composition (low complexity).

It belongs to the eukaryotic ribosomal protein eL29 family. In terms of assembly, component of the large ribosomal subunit.

Its subcellular location is the cytoplasm. Component of the large ribosomal subunit. The ribosome is a large ribonucleoprotein complex responsible for the synthesis of proteins in the cell. In Rattus norvegicus (Rat), this protein is Large ribosomal subunit protein eL29 (Rpl29).